Here is a 90-residue protein sequence, read N- to C-terminus: Co-chaperonin GroES (90 aa).

It belongs to the GroES chaperonin family. In terms of assembly, heptamer of 7 subunits arranged in a ring. Interacts with the chaperonin GroEL.

It localises to the cytoplasm. Together with the chaperonin GroEL, plays an essential role in assisting protein folding. The GroEL-GroES system forms a nano-cage that allows encapsulation of the non-native substrate proteins and provides a physical environment optimized to promote and accelerate protein folding. GroES binds to the apical surface of the GroEL ring, thereby capping the opening of the GroEL channel. This is Co-chaperonin GroES from Thermosipho melanesiensis (strain DSM 12029 / CIP 104789 / BI429).